The sequence spans 425 residues: Queuine tRNA-ribosyltransferase accessory subunit 2 (425 aa).

The segment at 302–323 is disordered; that stretch reads QNGAQDLEKNSPEEDQEEEVVK. Zn(2+) contacts are provided by C351, C353, C356, and H382.

The protein belongs to the queuine tRNA-ribosyltransferase family. QTRT2 subfamily. Heterodimer of a catalytic subunit QTRT1 and an accessory subunit QTRT2. Zn(2+) serves as cofactor.

It is found in the cytoplasm. Its subcellular location is the mitochondrion outer membrane. Non-catalytic subunit of the queuine tRNA-ribosyltransferase (TGT) that catalyzes the base-exchange of a guanine (G) residue with queuine (Q) at position 34 (anticodon wobble position) in tRNAs with GU(N) anticodons (tRNA-Asp, -Asn, -His and -Tyr), resulting in the hypermodified nucleoside queuosine (7-(((4,5-cis-dihydroxy-2-cyclopenten-1-yl)amino)methyl)-7-deazaguanosine). This Gallus gallus (Chicken) protein is Queuine tRNA-ribosyltransferase accessory subunit 2.